The primary structure comprises 298 residues: Pantothenate synthetase (298 aa).

30–37 contributes to the ATP binding site; the sequence is MGNLHEGH. The active-site Proton donor is His37. Gln61 provides a ligand contact to (R)-pantoate. Gln61 contributes to the beta-alanine binding site. ATP is bound at residue 149–152; the sequence is GEKD. Gln155 contacts (R)-pantoate. ATP-binding positions include Val178 and 186-189; that span reads MSSR.

The protein belongs to the pantothenate synthetase family. In terms of assembly, homodimer.

It is found in the cytoplasm. The enzyme catalyses (R)-pantoate + beta-alanine + ATP = (R)-pantothenate + AMP + diphosphate + H(+). It participates in cofactor biosynthesis; (R)-pantothenate biosynthesis; (R)-pantothenate from (R)-pantoate and beta-alanine: step 1/1. Functionally, catalyzes the condensation of pantoate with beta-alanine in an ATP-dependent reaction via a pantoyl-adenylate intermediate. This is Pantothenate synthetase from Aliivibrio salmonicida (strain LFI1238) (Vibrio salmonicida (strain LFI1238)).